Here is a 54-residue protein sequence, read N- to C-terminus: Protein YmjE (54 aa).

The chain is Protein YmjE from Escherichia coli (strain K12).